The sequence spans 484 residues: Alginate production protein AlgE (484 aa).

The first 25 residues, 1–25 (MSRKQRISAGLGLGASLLCCNPLFA), serve as a signal peptide directing secretion. Residues 93–103 (TDPTDPNEEPG) show a composition bias toward acidic residues. The segment at 93-118 (TDPTDPNEEPGGDPANGFSRDSSRDP) is disordered.

It belongs to the AlgE family.

It is found in the cell outer membrane. It functions in the pathway glycan biosynthesis; alginate biosynthesis. Functionally, has non-porin-like, channel-forming properties and probably functions as an alginate permeability pore. This Azotobacter vinelandii protein is Alginate production protein AlgE (algE).